The following is a 168-amino-acid chain: Photosystem I assembly protein Ycf3 (168 aa).

TPR repeat units lie at residues 35–68 (AFTY…EIDP), 72–105 (SYIL…NPFL), and 120–153 (GEQA…TPGN).

It belongs to the Ycf3 family.

The protein localises to the plastid. The protein resides in the chloroplast thylakoid membrane. Its function is as follows. Essential for the assembly of the photosystem I (PSI) complex. May act as a chaperone-like factor to guide the assembly of the PSI subunits. This Atropa belladonna (Belladonna) protein is Photosystem I assembly protein Ycf3.